A 397-amino-acid chain; its full sequence is Phosphoglycerate kinase (397 aa).

Residues 21–23, R36, 59–62, R119, and R152 each bind substrate; these read DVN and HFGR. ATP is bound by residues K202, E324, and 354 to 357; that span reads GGDT.

This sequence belongs to the phosphoglycerate kinase family. Monomer.

The protein localises to the cytoplasm. The catalysed reaction is (2R)-3-phosphoglycerate + ATP = (2R)-3-phospho-glyceroyl phosphate + ADP. It functions in the pathway carbohydrate degradation; glycolysis; pyruvate from D-glyceraldehyde 3-phosphate: step 2/5. The chain is Phosphoglycerate kinase from Cereibacter sphaeroides (strain KD131 / KCTC 12085) (Rhodobacter sphaeroides).